A 213-amino-acid chain; its full sequence is Large ribosomal subunit protein uL3 (213 aa).

The protein belongs to the universal ribosomal protein uL3 family. As to quaternary structure, part of the 50S ribosomal subunit. Forms a cluster with proteins L14 and L19.

One of the primary rRNA binding proteins, it binds directly near the 3'-end of the 23S rRNA, where it nucleates assembly of the 50S subunit. The sequence is that of Large ribosomal subunit protein uL3 from Bifidobacterium adolescentis (strain ATCC 15703 / DSM 20083 / NCTC 11814 / E194a).